An 82-amino-acid polypeptide reads, in one-letter code: Three-finger toxin MicTx3 (82 aa).

The N-terminal stretch at 1–21 is a signal peptide; that stretch reads MKTLLLTLVVVTIMCLDLGYT. 4 disulfides stabilise this stretch: Cys-24/Cys-44, Cys-38/Cys-59, Cys-63/Cys-74, and Cys-75/Cys-80.

The protein belongs to the three-finger toxin family. Short-chain subfamily. As to expression, expressed by the venom gland.

It localises to the secreted. In terms of biological role, has been described to inhibit nicotinic acetylcholine receptor (nAChR) alpha-7/CHRNA7 subunits and to bind acetylcholine binding protein (AChBP) (Kd=29.5 nM). The protein is Three-finger toxin MicTx3 of Micrurus corallinus (Brazilian coral snake).